Reading from the N-terminus, the 752-residue chain is Myotubularin-related protein 10 (752 aa).

In terms of domain architecture, Myotubularin phosphatase spans 206–636; that stretch reads FDCSSDWDRE…SHLSVWKLYF (431 aa). Positions 652-683 form a coiled coil; the sequence is TAFHKLSVLTDEIEMLQNQLRQYKGAAGTANT.

It belongs to the protein-tyrosine phosphatase family. Non-receptor class myotubularin subfamily.

The sequence is that of Myotubularin-related protein 10 (mtmr10) from Danio rerio (Zebrafish).